Here is a 370-residue protein sequence, read N- to C-terminus: MAPKLQAQFDAVKVLNETQSKFEMVQILDEDGNVVNEDLVPDLTDEQLVELMERMVWTRILDQRSISLNRQGRLGFYAPTAGQEASQLASQYALESEDFILPGYRDVPQIIWHGLPLTDAFLFSRGHFKGNQFPEGVNALSPQIIIGAQYIQTAGVAFGLKKRGKNAVAITYTGDGGSSQGDFYEGINFASAYKAPAIFVIQNNNYAISTPRSKQTAAETLAQKAISVGIPGIQVDGMDALAVYQATLEARERAVAGEGPTVIETLTYRYGPHTMAGDDPTRYRTSDEDAEWEKKDPLVRFRKYLEAKGLWNEDKENEVVERAKSEIKAAIKEADNTEKQTVTSLMDIMYEEMPQNLAEQYEIYKEKESK.

As to quaternary structure, heterodimer of an alpha and a beta chain. Thiamine diphosphate is required as a cofactor.

The enzyme catalyses N(6)-[(R)-lipoyl]-L-lysyl-[protein] + pyruvate + H(+) = N(6)-[(R)-S(8)-acetyldihydrolipoyl]-L-lysyl-[protein] + CO2. Functionally, the pyruvate dehydrogenase complex catalyzes the overall conversion of pyruvate to acetyl-CoA and CO(2). It contains multiple copies of three enzymatic components: pyruvate dehydrogenase (E1), dihydrolipoamide acetyltransferase (E2) and lipoamide dehydrogenase (E3). This chain is Pyruvate dehydrogenase E1 component subunit alpha (pdhA), found in Staphylococcus epidermidis (strain ATCC 35984 / DSM 28319 / BCRC 17069 / CCUG 31568 / BM 3577 / RP62A).